The chain runs to 447 residues: Methylenetetrahydrofolate--tRNA-(uracil-5-)-methyltransferase TrmFO (447 aa).

Residue G10–G15 coordinates FAD.

Belongs to the MnmG family. TrmFO subfamily. FAD is required as a cofactor.

It localises to the cytoplasm. It carries out the reaction uridine(54) in tRNA + (6R)-5,10-methylene-5,6,7,8-tetrahydrofolate + NADH + H(+) = 5-methyluridine(54) in tRNA + (6S)-5,6,7,8-tetrahydrofolate + NAD(+). The catalysed reaction is uridine(54) in tRNA + (6R)-5,10-methylene-5,6,7,8-tetrahydrofolate + NADPH + H(+) = 5-methyluridine(54) in tRNA + (6S)-5,6,7,8-tetrahydrofolate + NADP(+). Functionally, catalyzes the folate-dependent formation of 5-methyl-uridine at position 54 (M-5-U54) in all tRNAs. The chain is Methylenetetrahydrofolate--tRNA-(uracil-5-)-methyltransferase TrmFO from Lactococcus lactis subsp. lactis (strain IL1403) (Streptococcus lactis).